Consider the following 498-residue polypeptide: Galactose-1-phosphate uridylyltransferase (498 aa).

This sequence belongs to the galactose-1-phosphate uridylyltransferase type 2 family.

It localises to the cytoplasm. It catalyses the reaction alpha-D-galactose 1-phosphate + UDP-alpha-D-glucose = alpha-D-glucose 1-phosphate + UDP-alpha-D-galactose. It participates in carbohydrate metabolism; galactose metabolism. In Clostridium perfringens (strain 13 / Type A), this protein is Galactose-1-phosphate uridylyltransferase.